The chain runs to 214 residues: Pyridoxine/pyridoxamine 5'-phosphate oxidase (214 aa).

Substrate contacts are provided by residues Arg9–Tyr12 and Lys67. FMN contacts are provided by residues Arg62–Lys67, Phe77–Thr78, Lys84, and Gln106. Positions 124, 128, and 132 each coordinate substrate. FMN contacts are provided by residues Gln141–Ser142 and Trp186. Position 192 to 194 (Arg192 to His194) interacts with substrate. Arg196 is an FMN binding site.

Belongs to the pyridoxamine 5'-phosphate oxidase family. In terms of assembly, homodimer. It depends on FMN as a cofactor.

The catalysed reaction is pyridoxamine 5'-phosphate + O2 + H2O = pyridoxal 5'-phosphate + H2O2 + NH4(+). The enzyme catalyses pyridoxine 5'-phosphate + O2 = pyridoxal 5'-phosphate + H2O2. It functions in the pathway cofactor metabolism; pyridoxal 5'-phosphate salvage; pyridoxal 5'-phosphate from pyridoxamine 5'-phosphate: step 1/1. It participates in cofactor metabolism; pyridoxal 5'-phosphate salvage; pyridoxal 5'-phosphate from pyridoxine 5'-phosphate: step 1/1. Functionally, catalyzes the oxidation of either pyridoxine 5'-phosphate (PNP) or pyridoxamine 5'-phosphate (PMP) into pyridoxal 5'-phosphate (PLP). This chain is Pyridoxine/pyridoxamine 5'-phosphate oxidase, found in Microcystis aeruginosa (strain NIES-843 / IAM M-2473).